Here is a 1984-residue protein sequence, read N- to C-terminus: Sodium channel protein type 9 subunit alpha (1984 aa).

The Cytoplasmic portion of the chain corresponds to 1–125 (MAMLPPPGPQ…RRISIKILVH (125 aa)). Residues 26–39 (RISEEKAKEHKDEK) show a composition bias toward basic and acidic residues. The tract at residues 26–55 (RISEEKAKEHKDEKKDDEEEGPKPSSDLEA) is disordered. Residues 112–410 (FSPLRRISIK…VAMAYEEQNQ (299 aa)) form an I repeat. The helical transmembrane segment at 126–145 (SLFSMLIMCTILTNCIFMTL) threads the bilayer. Residues 146–150 (SNPPE) lie on the Extracellular side of the membrane. A helical membrane pass occupies residues 151 to 172 (WTKNVEYTFTGIYTFESLIKIL). The Cytoplasmic portion of the chain corresponds to 173–185 (ARGFCVGEFTFLR). A helical membrane pass occupies residues 186–204 (DPWNWLDFVVIVFAYLTEF). The Extracellular segment spans residues 205 to 210 (VNLGNV). Asparagine 209 is a glycosylation site (N-linked (GlcNAc...) asparagine). Residues 211–227 (SALRTFRVLRALKTISV) traverse the membrane as a helical segment. The Cytoplasmic segment spans residues 228-241 (IPGLKTIVGALIQS). The helical transmembrane segment at 242-267 (VKKLSDVMILTVFCLSVFALIGLQLF) threads the bilayer. Residues 268-346 (MGNLKHKCFR…PDYGYTSFDT (79 aa)) lie on the Extracellular side of the membrane. Cysteine 275 and cysteine 324 form a disulfide bridge. N-linked (GlcNAc...) asparagine glycosylation is present at asparagine 283. The segment at residues 347–363 (FSWAFLALFRLMTQDYW) is an intramembrane region (pore-forming). Residues 364–376 (ENLYQQTLRAAGK) lie on the Extracellular side of the membrane. The chain crosses the membrane as a helical span at residues 377–402 (TYMIFFVVVIFLGSFYLINLILAVVA). Over 403–744 (MAYEEQNQAN…LIYFIVMDPF (342 aa)) the chain is Cytoplasmic. The segment covering 461–471 (SSSETSRLSSK) has biased composition (low complexity). 2 disordered regions span residues 461–542 (SSSE…RGSL) and 576–609 (IFGDNESRRGSLFVPHRPRERRSSNISQASRSPP). Positions 474 to 486 (KERRNRRKKKKQK) are enriched in basic residues. Residues 489–509 (SGEEKGDDEKLSKSGSEESIR) are compositionally biased toward basic and acidic residues. The II repeat unit spans residues 725–988 (CSPYWIKFKK…EEDTDANNLQ (264 aa)). The helical transmembrane segment at 745–761 (VDLAITICIVLNTLFMA) threads the bilayer. At 762–770 (MEHHPMTEE) the chain is on the extracellular side. A helical transmembrane segment spans residues 771 to 795 (FKNVLAVGNLIFTGIFAAEMVLKLI). Topologically, residues 796 to 804 (AMDPYEYFQ) are cytoplasmic. A helical membrane pass occupies residues 805–821 (VGWNIFDSLIVTLSLIE). The Extracellular segment spans residues 822 to 830 (LFLADVEGL). A helical transmembrane segment spans residues 831–847 (SVLRSFRLLRVFKLAKS). Residues 848-864 (WPTLNMLIKIIGNSVGA) lie on the Cytoplasmic side of the membrane. A helical membrane pass occupies residues 865–887 (LGNLTLVLAIIVFIFAVVGMQLF). The Extracellular portion of the chain corresponds to 888-914 (GKSYKECVCKINVDCKLPRWHMNDFFH). A disulfide bridge links cysteine 896 with cysteine 902. Positions 915–927 (SFLIVFRVLCGEW) form an intramembrane region, pore-forming. Topologically, residues 928 to 939 (IETMWDCMEVAG) are extracellular. A disulfide bridge connects residues cysteine 934 and cysteine 943. The chain crosses the membrane as a helical span at residues 940 to 966 (QTMCLIVYMMVMVIGNLVVLNLFLALL). The Cytoplasmic segment spans residues 967–1185 (LSSFSSDNLT…WWTIRKTCYR (219 aa)). Disordered regions lie at residues 1015 to 1040 (KKPKGSKDTKRTADPNNKKENYISNR) and 1103 to 1145 (EELS…EPVN). The segment covering 1019 to 1035 (GSKDTKRTADPNNKKEN) has biased composition (basic and acidic residues). Residues 1135 to 1145 (GEEEAEAEPVN) show a composition bias toward acidic residues. The stretch at 1178–1486 (TIRKTCYRIV…KKYYNAMKKL (309 aa)) is one III repeat. A helical membrane pass occupies residues 1186 to 1210 (IVEHSWFESFIVLMILLSSGALAFE). At 1211-1222 (DIYIEKKKTIKI) the chain is on the extracellular side. Residues 1223–1248 (ILEYADKIFTYIFILEMLLKWVAYGY) traverse the membrane as a helical segment. The Cytoplasmic portion of the chain corresponds to 1249–1250 (KT). Residues 1251-1276 (YFTNAWCWLDFLIVDVSLVTLVANTL) traverse the membrane as a helical segment. Over 1277-1285 (GYSDLGPIK) the chain is Extracellular. Residues 1286–1302 (SLRTLRALRPLRALSRF) form a helical membrane-spanning segment. The Cytoplasmic segment spans residues 1303 to 1315 (EGMRVVVNALIGA). Residues 1316–1340 (IPSIMNVLLVCLIFWLIFSIMGVNL) form a helical membrane-spanning segment. At 1341–1392 (FAGKFYECVNTTDGSRFPTSQVANRSECFALMNVSGNVRWKNLKVNFDNVGL) the chain is on the extracellular side. Cysteine 1348 and cysteine 1368 are disulfide-bonded. N-linked (GlcNAc...) asparagine glycosylation is found at asparagine 1350, asparagine 1364, and asparagine 1373. The pore-forming intramembrane region spans 1393–1403 (GYLSLLQVATF). At 1404–1429 (KGWMDIMYAAVDSVNVNEQPKYEYSL) the chain is on the extracellular side. Residues 1430 to 1455 (YMYIYFVIFIIFGSFFTLNLFIGVII) traverse the membrane as a helical segment. Residues 1456 to 1512 (DNFNQQKKKLGGQDIFMTEEQKKYYNAMKKLGSKKPQKPIPRPGNKFQGCIFDLVTN) are Cytoplasmic-facing. Position 1488 is a phosphoserine; by PKC (serine 1488). The stretch at 1495–1793 (IPRPGNKFQG…WEKFDPDATQ (299 aa)) is one IV repeat. The helical transmembrane segment at 1513–1532 (QAFDITIMVLICLNMVTMMV) threads the bilayer. Residues 1533–1543 (EKEGQTEYMDY) are Extracellular-facing. A helical membrane pass occupies residues 1544–1565 (VLHWINMVFIILFTGECVLKLI). Over 1566-1574 (SLRHYYFTV) the chain is Cytoplasmic. The helical transmembrane segment at 1575–1596 (GWNIFDFVVVILSIVGMFLAEM) threads the bilayer. Residues 1597-1605 (IEKYFVSPT) lie on the Extracellular side of the membrane. A helical membrane pass occupies residues 1606–1625 (LFRVIRLARIGRILRLIKGA). Over 1626–1638 (KGIRTLLFALMMS) the chain is Cytoplasmic. A helical membrane pass occupies residues 1639-1661 (LPALFNIGLLLFLVMFIYAIFGM). Over 1662–1684 (SNFAYVKKEAGINDMFNFETFGN) the chain is Extracellular. The pore-forming intramembrane region spans 1685–1697 (SMICLFQITTSAG). The Extracellular segment spans residues 1698-1731 (WDGLLAPILNSAPPDCDPKKVHPGSSVEGDCGNP). Residues cysteine 1713 and cysteine 1728 are joined by a disulfide bond. Residues 1732–1757 (SVGIFYFVSYIIISFLVVVNMYIAVI) form a helical membrane-spanning segment. Over 1758-1984 (LENFSVATEE…EDKEKDESRK (227 aa)) the chain is Cytoplasmic. The IQ domain maps to 1887–1916 (EEVSATIIQRAYRRYRLRQHVKNISSIYIK). Positions 1916–1930 (KDGDRDDDLPNKEDT) are enriched in basic and acidic residues. A disordered region spans residues 1916 to 1984 (KDGDRDDDLP…EDKEKDESRK (69 aa)). Residues 1946 to 1958 (VTASTISPPSYDS) show a composition bias toward polar residues. Over residues 1960–1984 (TKPDQEKYETDKTEKEDKEKDESRK) the composition is skewed to basic and acidic residues.

The protein belongs to the sodium channel (TC 1.A.1.10) family. Nav1.7/SCN9A subfamily. As to quaternary structure, the Nav1.7 voltage-gated sodium channel consists of an ion-conducting alpha subunit SCN9A which is functional on its own regulated by one or more beta-1 (SCN1B), beta-2 (SCN2B), beta-3 (SCN3B) and beta-4 (SCN4B) subunits. SCN1B and SCN3B are non-covalently associated with SCN9A. SCN2B and SCN4B are disulfide-linked to SCN9A. SCN1B regulates channel inactivation. Interacts with NEDD4 and NEDD4L; regulates Nav1.7 activity most probably through ubiquitination and subsequent endocytosis. Interacts with TMEM233; modulates the gating properties of NaV1.7. Phosphorylation at Ser-1488 by PKC in a highly conserved cytoplasmic loop increases peak sodium currents. Post-translationally, ubiquitinated by NEDD4L; which may promote its endocytosis. Does not seem to be ubiquitinated by NEDD4. In terms of processing, ubiquitinated by NEDD4L; which may promote its endocytosis. As to expression, expressed at high level in the dorsal root ganglion and at much lower levels in the brain, sciatic nerve, nodose ganglia, heart, thyroid and adrenal glands and Schwann cells, but not in the cardiac and skeletal muscles, brain and liver.

It localises to the cell membrane. Its subcellular location is the cell projection. It is found in the neuron projection. The protein resides in the axon. The catalysed reaction is Na(+)(in) = Na(+)(out). Inhibited by the conotoxin GVIIJ. Pore-forming subunit of Nav1.7, a voltage-gated sodium (Nav) channel that directly mediates the depolarizing phase of action potentials in excitable membranes. Navs, also called VGSCs (voltage-gated sodium channels) or VDSCs (voltage-dependent sodium channels), operate by switching between closed and open conformations depending on the voltage difference across the membrane. In the open conformation they allow Na(+) ions to selectively pass through the pore, along their electrochemical gradient. The influx of Na(+) ions provokes membrane depolarization, initiating the propagation of electrical signals throughout cells and tissues. Nav1.7 plays a crucial role in controlling the excitability and action potential propagation from nociceptor neurons, thereby contributing to the sensory perception of pain. In Rattus norvegicus (Rat), this protein is Sodium channel protein type 9 subunit alpha.